Here is a 395-residue protein sequence, read N- to C-terminus: D-alanine--D-alanine ligase (395 aa).

An ATP-grasp domain is found at Lys172–Glu391. Asp204 to Glu266 lines the ATP pocket. Residues Asp345, Glu358, and Asn360 each coordinate Mg(2+).

This sequence belongs to the D-alanine--D-alanine ligase family. Mg(2+) serves as cofactor. Mn(2+) is required as a cofactor.

Its subcellular location is the cytoplasm. It catalyses the reaction 2 D-alanine + ATP = D-alanyl-D-alanine + ADP + phosphate + H(+). It participates in cell wall biogenesis; peptidoglycan biosynthesis. Cell wall formation. The protein is D-alanine--D-alanine ligase of Bifidobacterium longum subsp. infantis (strain ATCC 15697 / DSM 20088 / JCM 1222 / NCTC 11817 / S12).